The chain runs to 202 residues: Ion-translocating oxidoreductase complex subunit G (202 aa).

Residues 11 to 31 traverse the membrane as a helical segment; the sequence is AILLALIALICTALSTGIYLL. T177 carries the FMN phosphoryl threonine modification.

It belongs to the RnfG family. The complex is composed of six subunits: RnfA, RnfB, RnfC, RnfD, RnfE and RnfG. FMN serves as cofactor.

It localises to the cell inner membrane. In terms of biological role, part of a membrane-bound complex that couples electron transfer with translocation of ions across the membrane. In Pasteurella multocida (strain Pm70), this protein is Ion-translocating oxidoreductase complex subunit G.